The chain runs to 266 residues: Glucosamine-6-phosphate deaminase (266 aa).

The active-site Proton acceptor; for enolization step is the Asp-72. Asp-141 (for ring-opening step) is an active-site residue. The active-site Proton acceptor; for ring-opening step is His-143. The For ring-opening step role is filled by Glu-148.

This sequence belongs to the glucosamine/galactosamine-6-phosphate isomerase family. NagB subfamily. In terms of assembly, homohexamer.

It carries out the reaction alpha-D-glucosamine 6-phosphate + H2O = beta-D-fructose 6-phosphate + NH4(+). The protein operates within amino-sugar metabolism; N-acetylneuraminate degradation; D-fructose 6-phosphate from N-acetylneuraminate: step 5/5. With respect to regulation, allosterically activated by N-acetylglucosamine 6-phosphate (GlcNAc6P). Functionally, catalyzes the reversible isomerization-deamination of glucosamine 6-phosphate (GlcN6P) to form fructose 6-phosphate (Fru6P) and ammonium ion. This Pectobacterium atrosepticum (strain SCRI 1043 / ATCC BAA-672) (Erwinia carotovora subsp. atroseptica) protein is Glucosamine-6-phosphate deaminase.